Here is a 187-residue protein sequence, read N- to C-terminus: Troponin I, slow skeletal muscle (187 aa).

The residue at position 2 (Pro-2) is an N-acetylproline. The segment at 2–48 (PEVERKSKITASRKLMLKSLMLAKAKECWEQEHEEREAEKVRYLSER) is involved in binding TNC. Ser-58 carries the phosphoserine modification. Residues 97-118 (LKLKVLDLRGKFKRPPLRRVRV) are involved in binding TNC and actin.

Belongs to the troponin I family. Binds to actin and tropomyosin.

Functionally, troponin I is the inhibitory subunit of troponin, the thin filament regulatory complex which confers calcium-sensitivity to striated muscle actomyosin ATPase activity. The sequence is that of Troponin I, slow skeletal muscle (Tnni1) from Rattus norvegicus (Rat).